The sequence spans 138 residues: Small ribosomal subunit protein uS11c (138 aa).

Residues 1-22 (MAKAIPKISSRRNGRIGSRKGA) form a disordered region. The span at 9 to 22 (SSRRNGRIGSRKGA) shows a compositional bias: basic residues.

Belongs to the universal ribosomal protein uS11 family. In terms of assembly, part of the 30S ribosomal subunit.

It is found in the plastid. The protein localises to the chloroplast. The chain is Small ribosomal subunit protein uS11c from Nicotiana tomentosiformis (Tobacco).